Reading from the N-terminus, the 458-residue chain is tRNA modification GTPase MnmE (458 aa).

Positions 26, 88, and 127 each coordinate (6S)-5-formyl-5,6,7,8-tetrahydrofolate. A TrmE-type G domain is found at 224 to 378 (GLSTAIIGRP…IEDRINQLFF (155 aa)). Residue N234 participates in K(+) binding. GTP contacts are provided by residues 234 to 239 (NVGKSS), 253 to 259 (TDIAGTT), and 278 to 281 (DTAG). Position 238 (S238) interacts with Mg(2+). Residues T253, I255, and T258 each coordinate K(+). Residue T259 coordinates Mg(2+). Residue K458 coordinates (6S)-5-formyl-5,6,7,8-tetrahydrofolate.

Belongs to the TRAFAC class TrmE-Era-EngA-EngB-Septin-like GTPase superfamily. TrmE GTPase family. Homodimer. Heterotetramer of two MnmE and two MnmG subunits. The cofactor is K(+).

The protein resides in the cytoplasm. Its function is as follows. Exhibits a very high intrinsic GTPase hydrolysis rate. Involved in the addition of a carboxymethylaminomethyl (cmnm) group at the wobble position (U34) of certain tRNAs, forming tRNA-cmnm(5)s(2)U34. The chain is tRNA modification GTPase MnmE from Streptococcus pyogenes serotype M3 (strain ATCC BAA-595 / MGAS315).